Here is an 841-residue protein sequence, read N- to C-terminus: Alpha-glucuronidase A (841 aa).

An N-terminal signal peptide occupies residues 1–20 (MRGSNLFQLTLALLLSLVAA). Asn-51, Asn-76, Asn-149, Asn-222, Asn-279, Asn-310, Asn-343, Asn-450, Asn-465, Asn-527, Asn-576, Asn-682, Asn-723, and Asn-732 each carry an N-linked (GlcNAc...) asparagine glycan.

The protein belongs to the glycosyl hydrolase 67 family.

It is found in the secreted. The catalysed reaction is an alpha-D-glucuronoside + H2O = D-glucuronate + an alcohol. Functionally, alpha-glucuronidase involved in the hydrolysis of xylan, a major structural heterogeneous polysaccharide found in plant biomass representing the second most abundant polysaccharide in the biosphere, after cellulose. Releases 4-O-methylglucuronic acid from xylan. This is Alpha-glucuronidase A (aguA) from Aspergillus tubingensis.